A 151-amino-acid polypeptide reads, in one-letter code: Multiprotein-bridging factor 1 (151 aa).

Disordered regions lie at residues 1 to 29 and 78 to 98; these read MSDWDTNTIIGSRARAGGSGPRANVARSQ and DPNVGRAISRARTDKKMSQKD. The interval 41 to 119 is essential for TBP-binding; that stretch reads VVSVDKKYGS…VNDYEAARAI (79 aa). Residues 85 to 139 enclose the HTH cro/C1-type domain; the sequence is ISRARTDKKMSQKDLATKINEKPTVVNDYEAARAIPNQQVLSKLERALGVKLRGN. Residues 88 to 98 show a composition bias toward basic and acidic residues; it reads ARTDKKMSQKD. The H-T-H motif DNA-binding region spans 96–115; that stretch reads QKDLATKINEKPTVVNDYEA. Residue serine 143 is modified to Phosphoserine.

Belongs to the MBF1 family. Interacts with TBP and the transcription factor GCN4. Interacts with RPS3/us3.

Its subcellular location is the cytoplasm. It is found in the nucleus. In terms of biological role, transcriptional coactivator that stimulates GCN4-dependent transcriptional activity by bridging the DNA-binding region of GCN4 and TBP (SPT15), thereby recruiting TBP to GCN4-bound promoters. Involved in induction of the ribosome quality control (RQC) pathway; a pathway that degrades nascent peptide chains during problematic translation. Required to prevent stalled ribosomes from frameshifting. This is Multiprotein-bridging factor 1 (MBF1) from Saccharomyces cerevisiae (strain ATCC 204508 / S288c) (Baker's yeast).